Reading from the N-terminus, the 382-residue chain is Dual-specificity RNA methyltransferase RlmN (382 aa).

Glu-113 serves as the catalytic Proton acceptor. The 240-residue stretch at 119–358 (EINRATLCIS…TTIRKQRGID (240 aa)) folds into the Radical SAM core domain. Cys-126 and Cys-363 form a disulfide bridge. [4Fe-4S] cluster is bound by residues Cys-133, Cys-137, and Cys-140. S-adenosyl-L-methionine-binding positions include 187-188 (GE), Ser-219, 241-243 (SLH), and Asn-320. The active-site S-methylcysteine intermediate is Cys-363.

It belongs to the radical SAM superfamily. RlmN family. [4Fe-4S] cluster serves as cofactor.

Its subcellular location is the cytoplasm. The catalysed reaction is adenosine(2503) in 23S rRNA + 2 reduced [2Fe-2S]-[ferredoxin] + 2 S-adenosyl-L-methionine = 2-methyladenosine(2503) in 23S rRNA + 5'-deoxyadenosine + L-methionine + 2 oxidized [2Fe-2S]-[ferredoxin] + S-adenosyl-L-homocysteine. The enzyme catalyses adenosine(37) in tRNA + 2 reduced [2Fe-2S]-[ferredoxin] + 2 S-adenosyl-L-methionine = 2-methyladenosine(37) in tRNA + 5'-deoxyadenosine + L-methionine + 2 oxidized [2Fe-2S]-[ferredoxin] + S-adenosyl-L-homocysteine. Its function is as follows. Specifically methylates position 2 of adenine 2503 in 23S rRNA and position 2 of adenine 37 in tRNAs. m2A2503 modification seems to play a crucial role in the proofreading step occurring at the peptidyl transferase center and thus would serve to optimize ribosomal fidelity. The polypeptide is Dual-specificity RNA methyltransferase RlmN (Wigglesworthia glossinidia brevipalpis).